Consider the following 590-residue polypeptide: MAKILLLPPALINQIAAGEVIERPASVVKEIVENAIDAGATRLALEIEAAGSKLIRLSDNGSGIEKEDLALAFTTHATSKIRTLEDLEQVSSLGFRGEALASIASISKTTLTSCTQSSDHAWKISPHLNENITPAAHPQGTTIEIRDLFYNTPARKKFLRSDRTERYHITQLLAGIALSRAPFVITLHEQDRKILEYGGKTLKESLKSVMGDEFLAQSIEIQAEHEGMHLHGWVGLPTYTHQQTDKQYFFVNQRLVSDKLVAHAIKQAYEDMIHRQRHPIFVLFLTLDPALVDVNAHPSKREVRFRQAQLTHDFMFSSLHRALRNIQPRAAQLTPLSSASPKLPESTTATAQPHHKMIPHTFARPPRLQETKAYYQWAQTPPPAVTPAPQPEIKKINLPLGQALGQIHGTFIVAENAQGLVVVDMHAAHERILYEQFKSVLKTQKQIPVQRLLLPLPLTLTPVQQDSLAQHGAWLKTLGFDWTINDKEFILLTVPARLKNSDCISIIGDVLQELSEFPKSTQLQRAQEQIIANMCCHQAVRAHDLLSISEMNQLLRDLETTPAAGQCNHGRPTWIQLDATQLDALFLRGQ.

The segment covering 335 to 351 (PLSSASPKLPESTTATA) has biased composition (polar residues). The tract at residues 335 to 354 (PLSSASPKLPESTTATAQPH) is disordered.

The protein belongs to the DNA mismatch repair MutL/HexB family.

In terms of biological role, this protein is involved in the repair of mismatches in DNA. It is required for dam-dependent methyl-directed DNA mismatch repair. May act as a 'molecular matchmaker', a protein that promotes the formation of a stable complex between two or more DNA-binding proteins in an ATP-dependent manner without itself being part of a final effector complex. This is DNA mismatch repair protein MutL from Dichelobacter nodosus (strain VCS1703A).